Consider the following 340-residue polypeptide: Probable cyclic nucleotide phosphodiesterase PsycPRwf_0181 (340 aa).

The tract at residues 1-36 is disordered; that stretch reads MAPLPHSVSPRHTQVADNGRLSEPTDYHPPTEISTD. The Fe cation site is built by Asp-47, His-49, Asp-128, Asn-158, His-237, His-276, and His-278. AMP-binding positions include His-49, Asp-128, and 158 to 159; that span reads NH. His-278 serves as a coordination point for AMP.

The protein belongs to the cyclic nucleotide phosphodiesterase class-III family. Requires Fe(2+) as cofactor.

This chain is Probable cyclic nucleotide phosphodiesterase PsycPRwf_0181, found in Psychrobacter sp. (strain PRwf-1).